The sequence spans 433 residues: PBSX phage terminase large subunit (433 aa).

It to B.subtilis YqaT and phage SPP1 terminase large subunit. As to quaternary structure, dimer of a small and a large subunit.

In terms of biological role, functions as a terminase. The chain is PBSX phage terminase large subunit (xtmB) from Bacillus subtilis (strain 168).